The following is a 213-amino-acid chain: ATP phosphoribosyltransferase (213 aa).

The protein belongs to the ATP phosphoribosyltransferase family. Short subfamily. In terms of assembly, heteromultimer composed of HisG and HisZ subunits.

It is found in the cytoplasm. It carries out the reaction 1-(5-phospho-beta-D-ribosyl)-ATP + diphosphate = 5-phospho-alpha-D-ribose 1-diphosphate + ATP. It participates in amino-acid biosynthesis; L-histidine biosynthesis; L-histidine from 5-phospho-alpha-D-ribose 1-diphosphate: step 1/9. Its function is as follows. Catalyzes the condensation of ATP and 5-phosphoribose 1-diphosphate to form N'-(5'-phosphoribosyl)-ATP (PR-ATP). Has a crucial role in the pathway because the rate of histidine biosynthesis seems to be controlled primarily by regulation of HisG enzymatic activity. The polypeptide is ATP phosphoribosyltransferase (hisG) (Listeria innocua serovar 6a (strain ATCC BAA-680 / CLIP 11262)).